Here is a 211-residue protein sequence, read N- to C-terminus: Thiamine-phosphate synthase (211 aa).

Residues 37-41 (QLRIK) and Asn-69 each bind 4-amino-2-methyl-5-(diphosphooxymethyl)pyrimidine. Asp-70 and Asp-89 together coordinate Mg(2+). Residue Ser-108 coordinates 4-amino-2-methyl-5-(diphosphooxymethyl)pyrimidine. 134–136 (TQT) lines the 2-[(2R,5Z)-2-carboxy-4-methylthiazol-5(2H)-ylidene]ethyl phosphate pocket. Lys-137 serves as a coordination point for 4-amino-2-methyl-5-(diphosphooxymethyl)pyrimidine. Residues Gly-166 and 186–187 (VS) contribute to the 2-[(2R,5Z)-2-carboxy-4-methylthiazol-5(2H)-ylidene]ethyl phosphate site.

The protein belongs to the thiamine-phosphate synthase family. Mg(2+) is required as a cofactor.

The catalysed reaction is 2-[(2R,5Z)-2-carboxy-4-methylthiazol-5(2H)-ylidene]ethyl phosphate + 4-amino-2-methyl-5-(diphosphooxymethyl)pyrimidine + 2 H(+) = thiamine phosphate + CO2 + diphosphate. It carries out the reaction 2-(2-carboxy-4-methylthiazol-5-yl)ethyl phosphate + 4-amino-2-methyl-5-(diphosphooxymethyl)pyrimidine + 2 H(+) = thiamine phosphate + CO2 + diphosphate. It catalyses the reaction 4-methyl-5-(2-phosphooxyethyl)-thiazole + 4-amino-2-methyl-5-(diphosphooxymethyl)pyrimidine + H(+) = thiamine phosphate + diphosphate. Its pathway is cofactor biosynthesis; thiamine diphosphate biosynthesis; thiamine phosphate from 4-amino-2-methyl-5-diphosphomethylpyrimidine and 4-methyl-5-(2-phosphoethyl)-thiazole: step 1/1. Functionally, condenses 4-methyl-5-(beta-hydroxyethyl)thiazole monophosphate (THZ-P) and 2-methyl-4-amino-5-hydroxymethyl pyrimidine pyrophosphate (HMP-PP) to form thiamine monophosphate (TMP). This Shigella dysenteriae serotype 1 (strain Sd197) protein is Thiamine-phosphate synthase.